We begin with the raw amino-acid sequence, 272 residues long: Sugar-phosphatase AraL (272 aa).

The protein belongs to the HAD-like hydrolase superfamily. Mg(2+) serves as cofactor.

It carries out the reaction sugar phosphate + H2O = sugar + phosphate.. It catalyses the reaction O-phospho-L-serine + H2O = L-serine + phosphate. The enzyme catalyses O-phospho-D-serine + H2O = D-serine + phosphate. Functionally, catalyzes the dephosphorylation of C5 and C6 carbon sugars in vitro. Catalyzes the dephosphorylation of 3'-AMP and phosphoserine in vitro. The polypeptide is Sugar-phosphatase AraL (araL) (Bacillus subtilis (strain 168)).